A 65-amino-acid polypeptide reads, in one-letter code: UPF0434 protein IL1511 (65 aa).

It belongs to the UPF0434 family.

This Idiomarina loihiensis (strain ATCC BAA-735 / DSM 15497 / L2-TR) protein is UPF0434 protein IL1511.